Consider the following 216-residue polypeptide: Small ribosomal subunit protein uS3 (216 aa).

The region spanning 20-91 (LKEFFEKALV…SVEIVVEKVH (72 aa)) is the KH type-2 domain.

The protein belongs to the universal ribosomal protein uS3 family.

This Encephalitozoon cuniculi (strain GB-M1) (Microsporidian parasite) protein is Small ribosomal subunit protein uS3 (RPS3).